Reading from the N-terminus, the 403-residue chain is GPI-N-acetylgalactosamine transferase PGAP4 (403 aa).

At 1–22 the chain is on the cytoplasmic side; the sequence is MSTSTSPAAMLLRRLRRLSWGS. A helical transmembrane segment spans residues 23–43; sequence TAVQLFILTVVTFGLLAPLAC. Topologically, residues 44–259 are lumenal; it reads HRLLHSYFYL…RLQHYINPEP (216 aa). Asn-87 is a glycosylation site (N-linked (GalNAc...) asparagine). A UDP-N-acetyl-alpha-D-galactosamine-binding site is contributed by Val-109. 2 disulfides stabilise this stretch: Cys-132-Cys-136 and Cys-144-Cys-194. Positions 211–213 match the DXD motif motif; sequence EDD. The chain crosses the membrane as a helical span at residues 260-280; the sequence is MRILEWVGVGMLLGPLLTWIY. Residues 281–287 are Cytoplasmic-facing; that stretch reads MRFASRP. The helical transmembrane segment at 288–308 threads the bilayer; it reads GFSWPVMLFFSLYSMGLVELV. Over 309–403 the chain is Lumenal; the sequence is GRHYFLELRR…LRYNFHPSLL (95 aa). Residues Cys-332 and Cys-333 are joined by a disulfide bond. Residues Thr-334, Pro-335, and Lys-362 each contribute to the UDP-N-acetyl-alpha-D-galactosamine site.

It belongs to the PGAP4 family. In terms of processing, glycosylated.

The protein localises to the golgi apparatus membrane. Functionally, golgi-resident glycosylphosphatidylinositol (GPI)-N-acetylgalactosamine transferase that catalyzes the N-acetyl-beta-D-galactosamine transfer from an UDP-N-acetyl-alpha-D-galactosamine to the 4-OH-position of the first mannose of the glycosylphosphatidylinositol (GPI) of a GPI-anchored protein (GPI-AP). This modification occurs after the fatty acid remodeling step of the GPI-anchor maturation. In Homo sapiens (Human), this protein is GPI-N-acetylgalactosamine transferase PGAP4.